The following is a 3313-amino-acid chain: MSQRGKRGNQHHHQSHHPPPQQQQRKDVEPQPPPTKRRKGRPPNGATTAAAAIAAAAAAAAAAAAGTATGGDRVPVIPSSNSKNEVEQELDIGGGGSGLLGAASSSSSITKSKSTKLAKSSSKSKSQGASTSSSWQARSVADIKMSSIYNRSSTEAPAELYRKDLISAMKLPDSEPLANYEYLVVADQWKQEWEKGVQVPVNPDSLPEPCVYVLPEPIVSPAHDFKLPKNRYLRITKDEHYSPELHCLTNVVALAENTCAYDIDPIDEAWLRLYNSDRAQCGAFHINETQFERVIEELEVRCWEQIQVILKQEEGLGIEFDENVICDVCRSPDSEEANEMVFCDNCNICVHQACYGITAIPSGQWLCRTCSMGITPDCVLCPNKAGAMKSNKSGKHWAHVSCALWIPEVSIGCVDRMEPITKISSIPQSRWSLVCVLCRKRVGSCIQCSKHSMSKGKKENAGGASGGGSASVTSSMHKANKYATGTGDGANEGSSACGKTGEDQRRRKNHRKNDMTSEERNQARAQRLQEVEAEFDKHVNINDISCHLFDVDDDAIVAIYNYWKLKRKSRHNRELIPPKSEDVEMIARKQEQQDLENHKLVVHLRQDLERVRNLCYMVSRREKLSRSLFKLREQVFYKQLGVLDETRLDKQQQKQDDKQRPALDMDAVIYANDGPTLYDRFYSSAGGQTVPAQYQNLEYVLEQLMGKLQSGKQGRGRASQSPNKRKQVAKASPTKKLNNGAITSRTSSPEKPAAMGKVPSTSTSTATATTAAKVRGAPPGKPLAGRRASKSGAATGTSTHNKTQSQSQSHSHIRSSASSHTSSGSSSSGDSSSPNGTSSSDSSSASDSGSESGSSSAASGISRRKSTTGSPLKKQSYARSVEQRQKQRQRRQSEAAAGASAASPNSRSATSSSEDEDEQQRRRQEPERERDGRGRGAIYNKTVPNRTQPTKSKQSTQADAGSGAGTGAAVETGAKRKLSTNTRGLAQMHKDAEESLSSDESEELLPLKNERQREAALSSGLAASGPTTGGRKMGQHIYSDSESSSSSNEKEQEEITAVESNVSDSQNQQTIRTKAAMKEFVPGTAATTTQSASSATAAASKFTKSTKEAKEGASSCKANSNAKLPYPADLLVVPQRQAAKKASENMRSTNLAATLQPDAADRMREPESHPATTIAKNKLKDSGSKQATEADKFGGGDKVRSKEQSKSTAKSAGEAIVERGKRGRPPKVPREPPAPSTSSTEKEKPPPPAEAKSTAPAAKPTAAKTSFAVSYVPQRQAAKKAAEQLKSSKPLQDTTFSTANESAEKEPAATTATTTGMTTLGVATSSPAKPSRRTSLKEAPNTPKESSANRRKSKEEAAAAAKTTTPIKRRIAAPNLSSSSSGDSDSSSSSSSSGSSSSSGSGSDSDSDSQASDAEKPRQAGKEPAPSAAAPCSTVSSNVPKRSPRKSVDKPAASAAAAAAAAATPAPPPPPQPLTARTRQNSTNKSPKRVPQKSVATVDIQDDAQSAPKTHSHRRQSSPDEGSKQVQSEQVTKRATRGSKSRPPSPVVKSSPEKQTARRKSRADESPKKIPNLEHEINQRKAASGKATSALDKMLDKKQQQINNSTPASPPRKSLTPTPTPPPARSPLPEKLQREPEPVVEPEVETEIEPATEAGELPMDIDEELTTAPTHTQLSANASKLADIIDDERPPAAPLPASPTPTPTSNDELSDAGSDLSERCRSRWRSRRRRRRRSHEPDEEHTHHTQHLLNEMEMARELEEERKNELLANASKYSASTSSPAVTVIPPDPPEIIELDSNSANSGGDQQQQQQQQPLPQQLMVHSPSSEVASTIQQQQQPPPSHQTLIDQLPVEHMPIVDTILEMEDSKFANNFASSLASVLNPPNPGQMSLLGSSLDRGEQISEEDSIQATRNLLEKLRKTKRKAQDDCCSKEAVDLLPPTPAIPSVFPFHNAADPEDIIHAQKEQQQQQQQQQQQQQQQQQQQQSCLYGNSSGPNSVASLTIKDSPMTANSGSYANSLTNTPNATPTNATMGNNLGASGGYQVNFGNSQQAPPLSCFLEKSPHQKGGCPLSNNGGAVPGATPDFVDLAAAAVKNSLGSYQAGAPVTAQSGAGSNSNKLSDYDENTRMQSPFGRMQRWNENDLIAARRSSSPSSVSESNDQPPATVAARNISQLEGCKTFFNSYASGNGGGGSAVNPTAPYSHAPLVNGIDGMSMFSNAAAPQQQTTPTHQQQQQQQQQQQQQRTPNSQFNGGIYPQLAVMMHTQSTTTESTPSLYGNGGVGVVPGVGVGVGAVPTTLPLAPPPQAPQYSGTPYTTPSLGMLPVQQQPVVPPVQVSTTPNHQFALASPVDGKIPAYPAHPAHPAHPAHPAHPAHPAQLLSSCVEAAVVSMMPPTTPVAVAAKESPNKRSSANSGSAAKKQPNKSPQLPQGKSPGKSPRQPVQPQPPTPPAPAPAVALPPSKYDPLTHTIQGKPRQRAPRGSGGSGAPGRGRGRGRGRGRGAGAASGMALPLPPPMSDYGSNTHIVNNLVGTPFEFNNYDDDITGPGVENLQSLRDRRRSFELRTTRGQPKPTPAPTAATTTNPLLHPVLPGPVDMRTYNLGFEAPHSTASQEAYQNNLLGAFDSGTADQTLSEFDEEDERQFQSALRATGTGTSPSKHPAVSAAPVAPAPAPAANSQPPANLLLHSTEANQMAPSVAATGGATHLMEGSLVEASLEATSEEVSIDSDTTIMNSKTSICDARNQLKLKIKSPLAYSGEHYGAMANSLSSSLSLSSSTLVQSSSAVQTTVSTSTVVSASSVGSGNSRRMRKKELLSLYVVQKDNLNDDSSCGLPAASDNLPLGPDFLRKSEEEEDVSTGNGNGSKRFKKNSSSRELRALDANSVLVEDQQLAGASGGGAGTASGDGRRRSACSSGSNNDNNGKTGAATSAGKRRGRSKTLESSEDDHQTPKLKIKIRGLSGSEAVASAGISNAGDSKSYSYEMTRRACPPKKRLTSNYSTPTLEEIKRDSMNYRKKVMQDFDKGEENNKQDSSGLPLDGEALMPQPPSKRPKSSKPKKDKKEKKRQKQKQLILNSSSATTTMTTTLIENTASASPGDKPKLILRINKRKTETSTKITCLEQPPVNEAPLRLKIARNLSGGGYIIGAKAEKKEDPPPDPPPDPNQPNVSPANELPLMAPLGETSPQGLLLNSFTPHSQNANASPALLGKDSGTPSPPCLVIDSSKSADVHDSTSLPESGVAAMGVPASLVGATTPLCVNVGNYENSNNSLPSASGTGSASSNSCNSNSNNNNNNGSGGGAASGGGSLLPLKKDCEVR.

Residues 1-16 (MSQRGKRGNQHHHQSH) are compositionally biased toward basic residues. The interval 1–136 (MSQRGKRGNQ…QGASTSSSWQ (136 aa)) is disordered. 2 stretches are compositionally biased toward low complexity: residues 42–71 (PPNG…ATGG) and 100–134 (LGAA…TSSS). The PHD-type 1 zinc-finger motif lies at 323–373 (NVICDVCRSPDSEEANEMVFCDNCNICVHQACYGITAIPSGQWLCRTCSMG). The C2HC pre-PHD-type zinc-finger motif lies at 375–409 (TPDCVLCPNKAGAMKSNKSGKHWAHVSCALWIPEV). The segment at 433 to 487 (LVCVLCRKRVGSCIQCSKHSMSKGKKENAGGASGGGSASVTSSMHKANKYATGTG) adopts a PHD-type 2; degenerate zinc-finger fold. Disordered regions lie at residues 453 to 526 (MSKG…ARAQ), 708 to 1076 (LQSG…TKAA), 1107 to 1842 (KEAK…PPSH), 1961 to 2033 (AQKE…TMGN), 2104 to 2136 (PVTA…RMQR), 2145 to 2164 (ARRS…PPAT), 2219 to 2252 (AAPQ…FNGG), 2353 to 2374 (PAYP…PAHP), 2398 to 2514 (VAAK…PPPM), 2563 to 2587 (TTRG…LHPV), 2647 to 2679 (ATGT…QPPA), 2827 to 2871 (SCGL…SSSR), 2888 to 2954 (LAGA…IKIR), 2978 to 2998 (YEMT…YSTP), 3017 to 3077 (DFDK…SATT), 3144 to 3233 (KAEK…SLPE), and 3259 to 3313 (YENS…CEVR). Over residues 512–526 (KNDMTSEERNQARAQ) the composition is skewed to basic and acidic residues. Over residues 735–749 (KKLNNGAITSRTSSP) the composition is skewed to polar residues. Low complexity predominate over residues 760–772 (STSTSTATATTAA). Over residues 792-802 (GAATGTSTHNK) the composition is skewed to polar residues. Composition is skewed to low complexity over residues 803–861 (TQSQ…ASGI) and 894–912 (EAAA…ATSS). The segment covering 919-934 (QQRRRQEPERERDGRG) has biased composition (basic and acidic residues). Residues 942–955 (TVPNRTQPTKSKQS) show a composition bias toward polar residues. A compositionally biased stretch (low complexity) spans 956–972 (TQADAGSGAGTGAAVET). Acidic residues predominate over residues 994-1003 (ESLSSDESEE). A compositionally biased stretch (low complexity) spans 1015 to 1025 (AALSSGLAASG). The segment covering 1058 to 1072 (VESNVSDSQNQQTIR) has biased composition (polar residues). Composition is skewed to basic and acidic residues over residues 1159–1168 (AADRMREPES) and 1178–1205 (KLKD…KEQS). The span at 1250 to 1266 (EAKSTAPAAKPTAAKTS) shows a compositional bias: low complexity. Over residues 1285 to 1301 (LKSSKPLQDTTFSTANE) the composition is skewed to polar residues. Low complexity-rich tracts occupy residues 1308 to 1324 (AATT…GVAT), 1377 to 1404 (SSSS…SGSD), and 1451 to 1464 (PAAS…AAAT). The span at 1475–1485 (TARTRQNSTNK) shows a compositional bias: polar residues. The segment covering 1551-1579 (SPEKQTARRKSRADESPKKIPNLEHEINQ) has biased composition (basic and acidic residues). Positions 1638-1650 (PVVEPEVETEIEP) are enriched in acidic residues. Residues 1667–1678 (TAPTHTQLSANA) are compositionally biased toward polar residues. Over residues 1691 to 1702 (PAAPLPASPTPT) the composition is skewed to pro residues. The segment covering 1722–1734 (SRWRSRRRRRRRS) has biased composition (basic residues). Positions 1744 to 1773 (HTQHLLNEMEMARELEEERKNELLANASKY) form a coiled coil. Residues 1753–1765 (EMARELEEERKNE) are compositionally biased toward basic and acidic residues. Polar residues-rich tracts occupy residues 1771 to 1781 (SKYSASTSSPA) and 1796 to 1805 (DSNSANSGGD). A compositionally biased stretch (low complexity) spans 1806-1819 (QQQQQQQQPLPQQL). Residues 1823–1832 (SPSSEVASTI) are compositionally biased toward polar residues. The span at 1965 to 1984 (QQQQQQQQQQQQQQQQQQQQ) shows a compositional bias: low complexity. Polar residues-rich tracts occupy residues 1985 to 1999 (SCLY…SVAS) and 2007 to 2018 (MTANSGSYANSL). Low complexity predominate over residues 2019 to 2033 (TNTPNATPTNATMGN). A compositionally biased stretch (polar residues) spans 2106 to 2118 (TAQSGAGSNSNKL). Low complexity-rich tracts occupy residues 2148 to 2157 (SSSPSSVSES) and 2222 to 2242 (QQQT…QQQQ). The span at 2439–2451 (PVQPQPPTPPAPA) shows a compositional bias: pro residues. Residues 2479-2488 (GSGGSGAPGR) show a composition bias toward gly residues. Over residues 2658 to 2679 (PAVSAAPVAPAPAPAANSQPPA) the composition is skewed to low complexity. Residues 2891 to 2900 (ASGGGAGTAS) show a composition bias toward gly residues. A compositionally biased stretch (polar residues) spans 2909 to 2924 (CSSGSNNDNNGKTGAA). The span at 2935-2946 (KTLESSEDDHQT) shows a compositional bias: basic and acidic residues. Residues 3017 to 3026 (DFDKGEENNK) are compositionally biased toward basic and acidic residues. A compositionally biased stretch (basic residues) spans 3046–3065 (KRPKSSKPKKDKKEKKRQKQ). A compositionally biased stretch (polar residues) spans 3179-3198 (TSPQGLLLNSFTPHSQNANA). A compositionally biased stretch (low complexity) spans 3268-3290 (SASGTGSASSNSCNSNSNNNNNN). The segment covering 3291–3302 (GSGGGAASGGGS) has biased composition (gly residues).

The protein belongs to the JADE family.

The protein localises to the nucleus. May function as a negative regulator of the EGFR/Ras/MAPK signaling pathway during eye development. The polypeptide is PHD finger protein rhinoceros (rno) (Drosophila pseudoobscura pseudoobscura (Fruit fly)).